The following is a 123-amino-acid chain: ATP synthase epsilon chain (123 aa).

This sequence belongs to the ATPase epsilon chain family. As to quaternary structure, F-type ATPases have 2 components, CF(1) - the catalytic core - and CF(0) - the membrane proton channel. CF(1) has five subunits: alpha(3), beta(3), gamma(1), delta(1), epsilon(1). CF(0) has three main subunits: a, b and c.

The protein resides in the cell inner membrane. Produces ATP from ADP in the presence of a proton gradient across the membrane. This Helicobacter acinonychis (strain Sheeba) protein is ATP synthase epsilon chain.